Consider the following 553-residue polypeptide: Methyl-coenzyme M reductase II subunit alpha (553 aa).

Gln150 provides a ligand contact to coenzyme F430. Coenzyme B contacts are provided by residues Arg228, 259–260 (KH), and Arg273. His260 carries the post-translational modification Pros-methylhistidine. Arg274 bears the 5-methylarginine mark. Tyr335 provides a ligand contact to coenzyme M. A 2-methylglutamine modification is found at Gln402. Tyr446 contacts coenzyme M. Gly447 is modified (1-thioglycine). A (Z)-2,3-didehydroaspartate modification is found at Asp452. Cys454 carries the S-methylcysteine modification.

Belongs to the methyl-coenzyme M reductase alpha subunit family. MCR is a hexamer of two alpha, two beta, and two gamma chains, forming a dimer of heterotrimers. The cofactor is coenzyme F430. Post-translationally, the alpha subunit contains six modified amino acids near the active site region. Is methylated on His-260, Arg-274, Gln-402 and Cys-454, probably by the action of specific S-adenosylmethionine-dependent methyltransferases. Also contains a thioglycine at position 447, forming a thiopeptide bond. Contains a didehydroaspartate residue at position 452. The methylation on C5 of Arg-274 is a post-translational methylation not essential in vivo, but which plays a role for the stability and structural integrity of MCR.

The catalysed reaction is coenzyme B + methyl-coenzyme M = methane + coenzyme M-coenzyme B heterodisulfide. The protein operates within one-carbon metabolism; methyl-coenzyme M reduction; methane from methyl-coenzyme M: step 1/1. Component of the methyl-coenzyme M reductase (MCR) I that catalyzes the reductive cleavage of methyl-coenzyme M (CoM-S-CH3 or 2-(methylthio)ethanesulfonate) using coenzyme B (CoB or 7-mercaptoheptanoylthreonine phosphate) as reductant which results in the production of methane and the mixed heterodisulfide of CoB and CoM (CoM-S-S-CoB). This is the final step in methanogenesis. This Methanothermobacter thermautotrophicus (strain ATCC 29096 / DSM 1053 / JCM 10044 / NBRC 100330 / Delta H) (Methanobacterium thermoautotrophicum) protein is Methyl-coenzyme M reductase II subunit alpha (mrtA).